We begin with the raw amino-acid sequence, 707 residues long: Glucose starvation modulator protein 1 (707 aa).

Residues 20-48 (CTFCHQKHLQCSNERPCKNCVKRNIADQC) constitute a DNA-binding region (zn(2)-C6 fungal-type). Disordered regions lie at residues 63–122 (NSKA…PNDL), 154–188 (QPTH…PPES), 260–283 (DQQQ…GPSH), and 385–404 (NVSS…SAIA). Composition is skewed to low complexity over residues 66–79 (AVAA…TTTT) and 91–104 (SPSI…ISPI). 2 stretches are compositionally biased toward polar residues: residues 105 to 114 (NTSTFDTNGH) and 154 to 172 (QPTH…QVQP). A compositionally biased stretch (low complexity) spans 178 to 188 (SSVPPSAPPES). The span at 260–274 (DQQQSSSEATGTSAS) shows a compositional bias: polar residues. The PAS domain occupies 522-591 (DYEKLSQLNS…FQLFKSVAVG (70 aa)). The span at 621-652 (NYNNNYNHNYSHNNNNNNNSNNSNNNGMSTGA) shows a compositional bias: low complexity. The tract at residues 621 to 659 (NYNNNYNHNYSHNNNNNNNSNNSNNNGMSTGAGNSGDGD) is disordered.

This sequence belongs to the ERT1/acuK family.

Its subcellular location is the nucleus. Functionally, transcription factor which regulates nonfermentable carbon utilization. This is Glucose starvation modulator protein 1 (GSM1) from Lodderomyces elongisporus (strain ATCC 11503 / CBS 2605 / JCM 1781 / NBRC 1676 / NRRL YB-4239) (Yeast).